The chain runs to 277 residues: Polyamine aminopropyltransferase (277 aa).

A PABS domain is found at 2–235 (ELWFTENQDE…SLWTFTMGSK (234 aa)). Residue Gln31 coordinates S-methyl-5'-thioadenosine. Residues His62 and Asp86 each contribute to the spermidine site. S-methyl-5'-thioadenosine is bound by residues Glu106 and 137–138 (DG). The active-site Proton acceptor is Asp155. Residue 155-158 (DSTD) coordinates spermidine. Pro162 contacts S-methyl-5'-thioadenosine.

Belongs to the spermidine/spermine synthase family. As to quaternary structure, homodimer or homotetramer.

The protein localises to the cytoplasm. It carries out the reaction S-adenosyl 3-(methylsulfanyl)propylamine + putrescine = S-methyl-5'-thioadenosine + spermidine + H(+). It participates in amine and polyamine biosynthesis; spermidine biosynthesis; spermidine from putrescine: step 1/1. Its function is as follows. Catalyzes the irreversible transfer of a propylamine group from the amino donor S-adenosylmethioninamine (decarboxy-AdoMet) to putrescine (1,4-diaminobutane) to yield spermidine. The sequence is that of Polyamine aminopropyltransferase from Thermoanaerobacter pseudethanolicus (strain ATCC 33223 / 39E) (Clostridium thermohydrosulfuricum).